The sequence spans 257 residues: Phosphatidylglycerol--prolipoprotein diacylglyceryl transferase (257 aa).

The next 4 membrane-spanning stretches (helical) occupy residues 12 to 32 (FSIR…VYLA), 49 to 69 (FILM…VIFE), 83 to 103 (IWNG…LLVI), and 109 to 129 (LINP…AQAI). Arg-131 contributes to the a 1,2-diacyl-sn-glycero-3-phospho-(1'-sn-glycerol) binding site. 3 consecutive transmembrane segments (helical) span residues 167 to 187 (VPTF…IMSI), 197 to 217 (GEVA…IEGM), and 226 to 246 (GLRV…VMII).

The protein belongs to the Lgt family.

Its subcellular location is the cell membrane. The catalysed reaction is L-cysteinyl-[prolipoprotein] + a 1,2-diacyl-sn-glycero-3-phospho-(1'-sn-glycerol) = an S-1,2-diacyl-sn-glyceryl-L-cysteinyl-[prolipoprotein] + sn-glycerol 1-phosphate + H(+). It participates in protein modification; lipoprotein biosynthesis (diacylglyceryl transfer). In terms of biological role, catalyzes the transfer of the diacylglyceryl group from phosphatidylglycerol to the sulfhydryl group of the N-terminal cysteine of a prolipoprotein, the first step in the formation of mature lipoproteins. The chain is Phosphatidylglycerol--prolipoprotein diacylglyceryl transferase from Streptococcus agalactiae serotype Ia (strain ATCC 27591 / A909 / CDC SS700).